The following is an 88-amino-acid chain: Apolipoprotein C-I (88 aa).

Residues 1 to 26 (MRLFIALPVLIVVVAMALEGPAPAQA) form the signal peptide.

The protein belongs to the apolipoprotein C1 family.

Its subcellular location is the secreted. Its function is as follows. Inhibitor of lipoprotein binding to the low density lipoprotein (LDL) receptor, LDL receptor-related protein, and very low density lipoprotein (VLDL) receptor. Associates with high density lipoproteins (HDL) and the triacylglycerol-rich lipoproteins in the plasma and makes up about 10% of the protein of the VLDL and 2% of that of HDL. Appears to interfere directly with fatty acid uptake and is also the major plasma inhibitor of cholesteryl ester transfer protein (CETP). Binds free fatty acids and reduces their intracellular esterification. Modulates the interaction of APOE with beta-migrating VLDL and inhibits binding of beta-VLDL to the LDL receptor-related protein. The protein is Apolipoprotein C-I (Apoc1) of Rattus norvegicus (Rat).